The primary structure comprises 1033 residues: Lethal(2) giant larvae protein homolog SRO7 (1033 aa).

Residues 16–45 (SLKGQNSETPIENSKASFKSKNSKTSTISK) are disordered. Over residues 18–27 (KGQNSETPIE) the composition is skewed to polar residues. The span at 28-45 (NSKASFKSKNSKTSTISK) shows a compositional bias: low complexity. 14 WD repeats span residues 81–114 (IAAA…VVIK), 121–156 (IKEM…TTVF), 161–197 (ITSI…SFKL), 216–249 (SIQW…KQSF), 274–309 (VIQS…IMAR), 333–397 (KISK…MKIF), 405–440 (IVNI…ETML), 464–538 (ATTS…FEVN), 552–631 (DKIS…STAV), 638–673 (TSAI…YMEN), 685–736 (VTCI…DITN), 745–799 (KIDA…THKG), 804–851 (LAAT…MSEH), and 865–888 (SVLR…STVK). A phosphoserine mark is found at Ser591 and Ser602. A disordered region spans residues 953–984 (SFSERSSDDNNANHPEHQYTKPTRKGRNSSYG).

This sequence belongs to the WD repeat L(2)GL family. Interacts with MYO2 and SEC9.

The protein resides in the cytoplasm. The protein localises to the cell membrane. Its function is as follows. Acts as an allosteric regulator of polarized exocytosis by promoting the targeted fusion of vesicles with the plasma membrane. Coordinates the spatial and temporal nature of both Rab-dependent tethering and SNARE-dependent membrane fusion of exocytic vesicles with the plasma membrane. Required for targeting of the sodium pumping ATPase ENA1 to the Cell Surface, thus being involved in maintenance of ion homeostasis in cells exposed to NaCl stress. May be involved in the targeting of the myosin proteins to their intrinsic pathways. Multicopy suppressor of RHO3. May also participate in the maintenance of cell polarity and bud growth. This is Lethal(2) giant larvae protein homolog SRO7 (SRO7) from Saccharomyces cerevisiae (strain ATCC 204508 / S288c) (Baker's yeast).